Reading from the N-terminus, the 289-residue chain is Oxaloacetate decarboxylase (289 aa).

Ser50 contacts substrate. A Mg(2+)-binding site is contributed by Asp88. Substrate contacts are provided by Arg159 and His235.

The protein belongs to the isocitrate lyase family. Oxaloacetate decarboxylase subfamily. Homotetramer; dimer of dimers. The cofactor is Mg(2+).

It catalyses the reaction oxaloacetate + H(+) = pyruvate + CO2. In terms of biological role, catalyzes the decarboxylation of oxaloacetate into pyruvate. Seems to play a role in maintaining cellular concentrations of bicarbonate and pyruvate. The sequence is that of Oxaloacetate decarboxylase from Pseudomonas fluorescens (strain SBW25).